Reading from the N-terminus, the 484-residue chain is Pentatricopeptide repeat-containing protein At1g09190 (484 aa).

PPR repeat units lie at residues 66–100 (NVLV…GIWA), 101–135 (DEYT…GFHR), 136–166 (LGKI…MSER), 167–197 (NVVV…MSER), 198–232 (SIVS…GFDP), 233–267 (DEAT…GLFK), 269–299 (FITV…MQRR), 300–334 (NVVS…GKVA), 336–366 (NEAT…MMER), and 372–406 (RTEH…ANAA). The tract at residues 407 to 482 (MWGSLLSACR…STGQSTICDV (76 aa)) is type E motif.

Belongs to the PPR family. PCMP-E subfamily.

This chain is Pentatricopeptide repeat-containing protein At1g09190 (PCMP-E70), found in Arabidopsis thaliana (Mouse-ear cress).